A 330-amino-acid polypeptide reads, in one-letter code: MLVVDAMGGDYAPREIVLGVQDFVEETGEKIVLVGRENEIKKELTKKGKSLGYIEIINADEVVTMEEKPTVAIKKKESSVWKGLQLVREGVAQGFFSAGNTGAVMASAVLCLGKINGIDRPAIITPLPTLTGQTFLIDAGANVDVKPENLFQFAVMAQVYLKTAYQIKNPRVALLSNGEEEGKGNDLIKKTFPILKEKISGFIGNIEGKDIFRGVADIIVADGFVGNIVLKTGEGLAESIFVLLKNEVFTGLRGSLGGFILRESLQKIKKRLDYAEYGGAPLLGVNGIVFIAHGRSRRLAVRNGLKVMTKTVESGFLAELIKGDFNVWKD.

The protein belongs to the PlsX family. As to quaternary structure, homodimer. Probably interacts with PlsY.

Its subcellular location is the cytoplasm. The enzyme catalyses a fatty acyl-[ACP] + phosphate = an acyl phosphate + holo-[ACP]. The protein operates within lipid metabolism; phospholipid metabolism. Catalyzes the reversible formation of acyl-phosphate (acyl-PO(4)) from acyl-[acyl-carrier-protein] (acyl-ACP). This enzyme utilizes acyl-ACP as fatty acyl donor, but not acyl-CoA. This is Phosphate acyltransferase from Carboxydothermus hydrogenoformans (strain ATCC BAA-161 / DSM 6008 / Z-2901).